A 377-amino-acid polypeptide reads, in one-letter code: Leukocyte elastase inhibitor (377 aa).

An N-acetylmethionine modification is found at Met1.

It belongs to the serpin family. Ov-serpin subfamily.

It is found in the cytoplasm. Its function is as follows. Regulates the activity of the neutrophil proteases. In Xenopus tropicalis (Western clawed frog), this protein is Leukocyte elastase inhibitor (serpinb1).